Consider the following 280-residue polypeptide: 3-methyl-2-oxobutanoate hydroxymethyltransferase (280 aa).

Positions 49 and 88 each coordinate Mg(2+). Residues 49 to 50 (DS), aspartate 88, and lysine 118 each bind 3-methyl-2-oxobutanoate. A Mg(2+)-binding site is contributed by glutamate 120. Residue glutamate 187 is the Proton acceptor of the active site.

The protein belongs to the PanB family. In terms of assembly, homodecamer; pentamer of dimers. Mg(2+) is required as a cofactor.

The protein localises to the cytoplasm. The catalysed reaction is 3-methyl-2-oxobutanoate + (6R)-5,10-methylene-5,6,7,8-tetrahydrofolate + H2O = 2-dehydropantoate + (6S)-5,6,7,8-tetrahydrofolate. The protein operates within cofactor biosynthesis; (R)-pantothenate biosynthesis; (R)-pantoate from 3-methyl-2-oxobutanoate: step 1/2. Catalyzes the reversible reaction in which hydroxymethyl group from 5,10-methylenetetrahydrofolate is transferred onto alpha-ketoisovalerate to form ketopantoate. This is 3-methyl-2-oxobutanoate hydroxymethyltransferase from Xanthobacter autotrophicus (strain ATCC BAA-1158 / Py2).